The chain runs to 277 residues: 3-methyl-2-oxobutanoate hydroxymethyltransferase (277 aa).

Asp43 and Asp82 together coordinate Mg(2+). 3-methyl-2-oxobutanoate is bound by residues 43-44 (DS), Asp82, and Lys112. Residue Glu114 participates in Mg(2+) binding. Glu181 functions as the Proton acceptor in the catalytic mechanism.

This sequence belongs to the PanB family. Homodecamer; pentamer of dimers. It depends on Mg(2+) as a cofactor.

It is found in the cytoplasm. The catalysed reaction is 3-methyl-2-oxobutanoate + (6R)-5,10-methylene-5,6,7,8-tetrahydrofolate + H2O = 2-dehydropantoate + (6S)-5,6,7,8-tetrahydrofolate. It participates in cofactor biosynthesis; (R)-pantothenate biosynthesis; (R)-pantoate from 3-methyl-2-oxobutanoate: step 1/2. Catalyzes the reversible reaction in which hydroxymethyl group from 5,10-methylenetetrahydrofolate is transferred onto alpha-ketoisovalerate to form ketopantoate. This chain is 3-methyl-2-oxobutanoate hydroxymethyltransferase, found in Exiguobacterium sp. (strain ATCC BAA-1283 / AT1b).